We begin with the raw amino-acid sequence, 45 residues long: Mu-conotoxin-like Cal 12.1.2e (45 aa).

Disulfide bonds link Cys-3-Cys-16, Cys-11-Cys-28, Cys-18-Cys-33, and Cys-27-Cys-39. 6'-bromotryptophan is present on Trp-17. Pro-23 bears the 4-hydroxyproline mark. The residue at position 38 (Trp-38) is a 6'-bromotryptophan. The residue at position 40 (Pro-40) is a 4-hydroxyproline.

Expressed by the venom duct.

The protein resides in the secreted. In terms of biological role, mu-conotoxins block voltage-gated sodium channels. This toxin reversibly blocks voltage-gated sodium channel in cephalopods, with no alteration in the voltage dependence of sodium conductance or on the kinetics of inactivation. This is Mu-conotoxin-like Cal 12.1.2e from Californiconus californicus (California cone).